The following is a 226-amino-acid chain: RNA-binding protein 24 (226 aa).

One can recognise an RRM domain in the interval 11–88; that stretch reads TKIFVGGLPY…RKANVNLAYL (78 aa).

It localises to the nucleus. The protein localises to the cytoplasm. Functionally, multifunctional RNA-binding protein involved in the regulation of pre-mRNA splicing, mRNA stability and mRNA translation important for cell fate decision and differentiation. Plays a major role in pre-mRNA alternative splicing regulation. Mediates preferentially muscle-specific exon inclusion in numerous mRNAs important for striated cardiac and skeletal muscle cell differentiation. Binds to intronic splicing enhancer (ISE) composed of stretches of GU-rich motifs localized in flanking intron of exon that will be included by alternative splicing. Involved in embryonic stem cell (ESC) transition to cardiac cell differentiation by promoting pre-mRNA alternative splicing events of several pluripotency and/or differentiation genes. Plays a role in the regulation of mRNA stability and mRNA translation to which it is bound. Involved in myogenic differentiation by regulating myog levels. Binds to a huge amount of mRNAs. Required for embryonic heart development, sarcomer and M-band formation in striated muscles. The protein is RNA-binding protein 24 (rbm24) of Xenopus tropicalis (Western clawed frog).